We begin with the raw amino-acid sequence, 490 residues long: Lignostilbene-alpha,beta-dioxygenase isozyme III (490 aa).

Fe cation is bound by residues H167, H218, H285, and H477.

Belongs to the carotenoid oxygenase family. Homodimer of two beta subunits. Fe(2+) is required as a cofactor.

The catalysed reaction is 1,2-bis(4-hydroxy-3-methoxyphenyl)ethylene + O2 = 2 vanillin. With respect to regulation, activity is high with beta-5 type stilbene and minimal with beta-1 type stilbene. A 4-hydroxyl group and trans-stilbene structure is essential for the binding of substrates to the enzyme. In terms of biological role, catalyzes the cleavage of the interphenyl double bond (C alpha-C beta) of lignin-derived polyphenolic diaryl-propane type compounds (Stilbene). This is Lignostilbene-alpha,beta-dioxygenase isozyme III from Sphingomonas paucimobilis (Pseudomonas paucimobilis).